Reading from the N-terminus, the 255-residue chain is Urease accessory protein UreD 1 (255 aa).

Belongs to the UreD family. As to quaternary structure, ureD, UreF and UreG form a complex that acts as a GTP-hydrolysis-dependent molecular chaperone, activating the urease apoprotein by helping to assemble the nickel containing metallocenter of UreC. The UreE protein probably delivers the nickel.

The protein resides in the cytoplasm. Required for maturation of urease via the functional incorporation of the urease nickel metallocenter. The protein is Urease accessory protein UreD 1 of Saccharopolyspora erythraea (strain ATCC 11635 / DSM 40517 / JCM 4748 / NBRC 13426 / NCIMB 8594 / NRRL 2338).